A 195-amino-acid polypeptide reads, in one-letter code: MAFVLSLLMALVLVSYGPGGSLGCYLSQRLMLDARENLRLLDRMNRLSPHSCLQDRKDFGLPQEMVEGDQLQEAQAFCVLYEMLQQSFNLFHTERSSAAWNTTLLEQLCTGLQQQLEDLDTCRGPVMGEKDSELGKMDPIVTVKKYFQGIHFYLKEKEYSDCAWEIVRVEMMRALSSSTSLQERLRKMGGDLNSP.

Residues methionine 1–glycine 23 form the signal peptide. 2 disulfides stabilise this stretch: cysteine 24–cysteine 122 and cysteine 52–cysteine 162. Residue asparagine 101 is glycosylated (N-linked (GlcNAc...) asparagine).

It belongs to the alpha/beta interferon family. IFN-alphaII subfamily. As to expression, constitutively and exclusively expressed in the mononuclear cells of the extraembryonic trophectoderm.

It localises to the secreted. Paracrine hormone primarily responsible for maternal recognition of pregnancy. Interacts with endometrial receptors, probably type I interferon receptors, and blocks estrogen receptor expression, preventing the estrogen-induced increase in oxytocin receptor expression in the endometrium. This results in the suppression of the pulsatile endometrial release of the luteolytic hormone prostaglandin F2-alpha, hindering the regression of the corpus luteum (luteolysis) and therefore a return to ovarian cyclicity. This, and a possible direct effect of IFN-tau on prostaglandin synthesis, leads in turn to continued ovarian progesterone secretion, which stimulates the secretion by the endometrium of the nutrients required for the growth of the conceptus. In summary, displays particularly high antiviral and antiproliferative potency concurrently with particular weak cytotoxicity, high antiluteolytic activity and immunomodulatory properties. In contrast with other IFNs, IFN-tau is not virally inducible. The sequence is that of Interferon tau-11 (IFNT11) from Ovis aries (Sheep).